The primary structure comprises 75 residues: Exodeoxyribonuclease 7 small subunit (75 aa).

This sequence belongs to the XseB family. As to quaternary structure, heterooligomer composed of large and small subunits.

It is found in the cytoplasm. The catalysed reaction is Exonucleolytic cleavage in either 5'- to 3'- or 3'- to 5'-direction to yield nucleoside 5'-phosphates.. In terms of biological role, bidirectionally degrades single-stranded DNA into large acid-insoluble oligonucleotides, which are then degraded further into small acid-soluble oligonucleotides. This chain is Exodeoxyribonuclease 7 small subunit, found in Chlamydia pneumoniae (Chlamydophila pneumoniae).